The primary structure comprises 324 residues: Endochitinase B (324 aa).

Residues Met-1–Ala-23 form the signal peptide. Residues Glu-24–Gly-65 form the Chitin-binding type-1 domain. Intrachain disulfides connect Cys-26–Cys-41, Cys-35–Cys-47, Cys-40–Cys-54, and Cys-59–Cys-63. 2 positions are modified to 4-hydroxyproline: Pro-67 and Pro-69. Intrachain disulfides connect Cys-96/Cys-158, Cys-170/Cys-178, and Cys-277/Cys-309. The active-site Proton donor is the Glu-140. A propeptide spans Gly-318–Met-324 (removed in mature form).

This sequence belongs to the glycosyl hydrolase 19 family. Chitinase class I subfamily. The 4-hydroxyproline residues are not glycosylated in this plant vacuolar protein.

Its subcellular location is the vacuole. It carries out the reaction Random endo-hydrolysis of N-acetyl-beta-D-glucosaminide (1-&gt;4)-beta-linkages in chitin and chitodextrins.. Functionally, defense against chitin-containing fungal pathogens. The chain is Endochitinase B (CHN50) from Nicotiana tabacum (Common tobacco).